A 65-amino-acid polypeptide reads, in one-letter code: Large ribosomal subunit protein bL31 (65 aa).

Positions 16, 18, 36, and 39 each coordinate Zn(2+).

This sequence belongs to the bacterial ribosomal protein bL31 family. Type A subfamily. As to quaternary structure, part of the 50S ribosomal subunit. Zn(2+) serves as cofactor.

Its function is as follows. Binds the 23S rRNA. This Geotalea daltonii (strain DSM 22248 / JCM 15807 / FRC-32) (Geobacter daltonii) protein is Large ribosomal subunit protein bL31.